The chain runs to 173 residues: Transcriptional repressor NrdR (173 aa).

A zinc finger spans residues 3 to 34 (CPYCGSLDTQVKDSRPTEDNTAIRRRRVCPDC). Residues 49–139 (LMVVKRSGRR…VYRNFREARD (91 aa)) enclose the ATP-cone domain.

Belongs to the NrdR family. Zn(2+) serves as cofactor.

Its function is as follows. Negatively regulates transcription of bacterial ribonucleotide reductase nrd genes and operons by binding to NrdR-boxes. The sequence is that of Transcriptional repressor NrdR from Azorhizobium caulinodans (strain ATCC 43989 / DSM 5975 / JCM 20966 / LMG 6465 / NBRC 14845 / NCIMB 13405 / ORS 571).